Here is a 156-residue protein sequence, read N- to C-terminus: Arginine repressor (156 aa).

The protein belongs to the ArgR family.

It localises to the cytoplasm. The protein operates within amino-acid biosynthesis; L-arginine biosynthesis [regulation]. Regulates arginine biosynthesis genes. This Edwardsiella ictaluri (strain 93-146) protein is Arginine repressor.